A 403-amino-acid chain; its full sequence is Ribosomal RNA large subunit methyltransferase I (403 aa).

The PUA domain occupies 9-88 (YPRLVLSKGR…ESIDIAFFTR (80 aa)).

Belongs to the methyltransferase superfamily. RlmI family.

It localises to the cytoplasm. The enzyme catalyses cytidine(1962) in 23S rRNA + S-adenosyl-L-methionine = 5-methylcytidine(1962) in 23S rRNA + S-adenosyl-L-homocysteine + H(+). Its function is as follows. Specifically methylates the cytosine at position 1962 (m5C1962) of 23S rRNA. This Salmonella newport (strain SL254) protein is Ribosomal RNA large subunit methyltransferase I.